Reading from the N-terminus, the 144-residue chain is NADH dehydrogenase [ubiquinone] 1 alpha subcomplex subunit 13 (144 aa).

Residues 30 to 51 form a helical membrane-spanning segment; that stretch reads LSGYSMLALGIGTLIYGHWSMM.

The protein belongs to the complex I NDUFA13 subunit family. Complex I is composed of 45 different subunits. Interacts with CARD15, but not with CARD4. Interacts with STAT3, but not with STAT1, STAT2 and STAT5A. Interacts with OLFM4.

It localises to the mitochondrion inner membrane. The protein resides in the nucleus. In terms of biological role, accessory subunit of the mitochondrial membrane respiratory chain NADH dehydrogenase (Complex I), that is believed not to be involved in catalysis. Complex I functions in the transfer of electrons from NADH to the respiratory chain. The immediate electron acceptor for the enzyme is believed to be ubiquinone. Involved in the interferon/all-trans-retinoic acid (IFN/RA) induced cell death. This apoptotic activity is inhibited by interaction with viral IRF1. Prevents the transactivation of STAT3 target genes. May play a role in CARD15-mediated innate mucosal responses and serve to regulate intestinal epithelial cell responses to microbes. The sequence is that of NADH dehydrogenase [ubiquinone] 1 alpha subcomplex subunit 13 (NDUFA13) from Pongo pygmaeus (Bornean orangutan).